A 399-amino-acid polypeptide reads, in one-letter code: Lovastatin esterase (399 aa).

S57 (nucleophile) is an active-site residue. Catalysis depends on proton acceptor residues K60 and Y170.

The protein belongs to the class-A beta-lactamase family.

It catalyses the reaction lovastatin + H2O = monacolin J + (S)-2-methylbutanoate + H(+). The catalysed reaction is pravastatin lactone + H2O = pravastatin diol lactone + (S)-2-methylbutanoate + H(+). The enzyme catalyses mevastatin + H2O = compactin diol lactone + (S)-2-methylbutanoate + H(+). In terms of biological role, esterase that can hydrolyze the side chain of lovastatin to produce monacolin J. Is also able to hydrolyze the side chains of mevastatin and pravastatin, but not simvastatin. The polypeptide is Lovastatin esterase (Penicillium rubens (strain ATCC 28089 / DSM 1075 / NRRL 1951 / Wisconsin 54-1255) (Penicillium chrysogenum)).